The chain runs to 127 residues: F420-non-reducing hydrogenase subunit G (127 aa).

The protein belongs to the [NiFe]/[NiFeSe] hydrogenase small subunit family. As to quaternary structure, the F420-non-reducing hydrogenase is composed of three subunits; MvhA, MvhD and MvhG. It forms a complex with the heterodisulfide reductase (hdr).

Part of a complex that provides reducing equivalents for heterodisulfide reductase. This is F420-non-reducing hydrogenase subunit G (mvhG) from Methanothermus fervidus.